Consider the following 214-residue polypeptide: External core antigen (214 aa).

The signal sequence occupies residues 1-19 (MQLFHLCLIISCTCPTVQA). The HBEAG stretch occupies residues 25-27 (GWL). A disordered region spans residues 165–214 (NAPILSTLPETTVVRRRDRGRSPRRRTPSPRRRRSQSPRRRRSQSRESQC). Residues 178 to 207 (VRRRDRGRSPRRRTPSPRRRRSQSPRRRRS) show a composition bias toward basic residues. A 1; half-length repeat occupies 186 to 192 (SPRRRTP). Residues 186–208 (SPRRRTPSPRRRRSQSPRRRRSQ) form a 3 X 8 AA repeats of S-P-R-R-R-R-S-Q region. Residues 186-214 (SPRRRTPSPRRRRSQSPRRRRSQSRESQC) constitute a propeptide that is removed on maturation. 2 repeat units span residues 193-200 (SPRRRRSQ) and 201-208 (SPRRRRSQ).

Belongs to the orthohepadnavirus precore antigen family. In terms of assembly, homodimerizes. Post-translationally, phosphorylated. Cleaved by host furin.

It is found in the secreted. The protein resides in the host nucleus. May regulate immune response to the intracellular capsid in acting as a T-cell tolerogen, by having an immunoregulatory effect which prevents destruction of infected cells by cytotoxic T-cells. This immune regulation may predispose to chronicity during perinatal infections and prevent severe liver injury during adult infections. The polypeptide is External core antigen (Hepatitis B virus genotype A2 (isolate Japan/11D11HCCW/1998) (HBV-A)).